Reading from the N-terminus, the 284-residue chain is MEPGMLGPHNLPHHEPISFGIDQILSGPETPGGGLGLGRGGQGHGENGAFSGGYHGASGYGPAGSLAPLPGSSGVGPGGVIRVPAHRPLPVPPPAGGAPAVPGPSGLGGAGGLAGLTFPWMDSGRRFAKDRLTAALSPFSGTRRIGHPYQNRTPPKRKKPRTSFSRSQVLELERRFLRQKYLASAERAALAKALRMTDAQVKTWFQNRRTKWRRQTAEEREAERHRAGRLLLHLQQDALPRPLRPPLPPDPLCLHNSSLFALQNLQPWAEDNKVASVSGLASVV.

Disordered stretches follow at residues 1 to 50 (MEPG…NGAF), 78 to 106 (GGVIRVPAHRPLPVPPPAGGAPAVPGPSG), and 139 to 166 (FSGTRRIGHPYQNRTPPKRKKPRTSFSR). A compositionally biased stretch (gly residues) spans 30–50 (TPGGGLGLGRGGQGHGENGAF). Over residues 87–96 (RPLPVPPPAG) the composition is skewed to pro residues. Positions 157 to 216 (RKKPRTSFSRSQVLELERRFLRQKYLASAERAALAKALRMTDAQVKTWFQNRRTKWRRQT) form a DNA-binding region, homeobox.

Its subcellular location is the nucleus. Transcription activator that binds DNA elements with the consensus sequence 5'-CGGTAATTGG-3'. Binds DNA via its homeobox. Required for normal cell death of enteric neurons in the gastrointestinal tract. Required for normal development of the enteric nervous system, and for proper development of normal motility of the gastrointestinal tract. The chain is T-cell leukemia homeobox protein 2 (TLX2) from Homo sapiens (Human).